A 427-amino-acid polypeptide reads, in one-letter code: Peptidase B (427 aa).

Lys195 and Asp200 together coordinate Mn(2+). The active site involves Lys207. Residues Asp218, Asp277, and Glu279 each coordinate Mn(2+). The active site involves Arg281.

Belongs to the peptidase M17 family. As to quaternary structure, homohexamer. The cofactor is Mn(2+).

The protein localises to the cytoplasm. It catalyses the reaction Release of an N-terminal amino acid, Xaa, from a peptide or arylamide. Xaa is preferably Glu or Asp but may be other amino acids, including Leu, Met, His, Cys and Gln.. Its function is as follows. Probably plays an important role in intracellular peptide degradation. In Escherichia coli (strain K12 / MC4100 / BW2952), this protein is Peptidase B.